Reading from the N-terminus, the 600-residue chain is Probable tripeptidyl-peptidase SED4 (600 aa).

Positions 1–22 (MVSFTLRAIGACLIGLPALITA) are cleaved as a signal peptide. Positions 23–202 (APTSHVSNDF…SVFTSDLEIT (180 aa)) are cleaved as a propeptide — removed in mature form. Residues Asn210 and Asn281 are each glycosylated (N-linked (GlcNAc...) asparagine). In terms of domain architecture, Peptidase S53 spans 212–600 (TITPDCIREL…FEKLSKLVLI (389 aa)). Residues Glu288 and Asp292 each act as charge relay system in the active site. N-linked (GlcNAc...) asparagine glycosylation is found at Asn323 and Asn404. Catalysis depends on Ser504, which acts as the Charge relay system. Ca(2+) contacts are provided by Asp546 and Ile547. The N-linked (GlcNAc...) asparagine glycan is linked to Asn575. The Ca(2+) site is built by Gly579 and Asp581.

Ca(2+) is required as a cofactor.

The protein localises to the secreted. It is found in the extracellular space. The catalysed reaction is Release of an N-terminal tripeptide from a polypeptide.. Secreted tripeptidyl-peptidase which degrades proteins at acidic pHs and is involved in virulence. In Arthroderma benhamiae (strain ATCC MYA-4681 / CBS 112371) (Trichophyton mentagrophytes), this protein is Probable tripeptidyl-peptidase SED4 (SED4).